A 319-amino-acid polypeptide reads, in one-letter code: Protein SODIUM POTASSIUM ROOT DEFECTIVE 1 (319 aa).

Residues Met1 to Cys13 show a composition bias toward polar residues. Disordered stretches follow at residues Met1–Gly113 and Ser191–Ser248. Residues Ser14–Ser27 are compositionally biased toward low complexity. Basic and acidic residues predominate over residues Ala36 to Arg49. The segment covering Leu58–Thr67 has biased composition (low complexity). Polar residues-rich tracts occupy residues Ser104–Gly113 and Thr200–Ser210. Over residues Ser224–Pro242 the composition is skewed to pro residues. Positions Asp249–Glu315 constitute an HMA domain. 2 residues coordinate Zn(2+): Cys260 and Cys263.

Interacts with FT, but not with TSF (TWIN SISTER OF FT). In terms of tissue distribution, expressed in vascular tissues of cotyledons, rosette leaves and roots in developing seedlings before and during the floral transition. Expressed specifically in the phloem companion cells. Not detected in embryos or seeds. Not detected in the vegetative shoot apex.

It localises to the cytoplasm. It is found in the nucleus. The protein localises to the endoplasmic reticulum. Required for root meristem maintenance after germination. Involved in phloem translocation, starch accumulation and flowering. Promotes flowering in the photoperiod pathway. Regulates long-distance movement of FT from leaves to the shoot apex through the phloem stream. In Arabidopsis thaliana (Mouse-ear cress), this protein is Protein SODIUM POTASSIUM ROOT DEFECTIVE 1.